A 729-amino-acid polypeptide reads, in one-letter code: Zorya protein ZorA (729 aa).

Transmembrane regions (helical) follow at residues 20-40 (PATV…FYFF), 135-155 (LPGI…MIGL), and 177-197 (VLYA…ITWL).

It belongs to the MotA family.

It localises to the cell inner membrane. In terms of biological role, component of antiviral defense system Zorya type I, composed of ZorA, ZorB, ZorC and ZorD. Expression of Zorya type I in E.coli (strain MG1655) confers 10,000-fold resistance to phage SECphi27, 100-fold resistance to lambda, and 10-fold resistance to T7. While most T7 infected Zorya-containing cells undergo abortive infection, a minority produce viable phage progeny. These eventually accumulate to a high multiplicity of infection, leading to culture collapse by 2 hours after initial infection. ZorA and ZorB probably assemble in the cell inner membrane and exert their effect there. The protein is Zorya protein ZorA of Escherichia coli O139:H28 (strain E24377A / ETEC).